Consider the following 47-residue polypeptide: Heat shock protein HSP 90 (47 aa).

This sequence belongs to the heat shock protein 90 family. In terms of assembly, homodimer.

Its subcellular location is the cytoplasm. Its function is as follows. Putative molecular chaperone that may promote the maturation, structural maintenance and proper regulation of specific target proteins. This Oryctolagus cuniculus (Rabbit) protein is Heat shock protein HSP 90.